Consider the following 481-residue polypeptide: FBD-associated F-box protein At5g44490 (481 aa).

The 48-residue stretch at 17–64 (DLMSKLTDALISQVLFYLPTKEAVSTSVLSSRWKSVWLLIPDLDLNSS) folds into the F-box domain. One can recognise an FBD domain in the interval 370-423 (EKSVSFSSVPQCLLSSLEFVEIKISRFGIISLGIGIARFFVENSVVLKKLVVHS).

This chain is FBD-associated F-box protein At5g44490, found in Arabidopsis thaliana (Mouse-ear cress).